A 358-amino-acid chain; its full sequence is 3-isopropylmalate dehydrogenase (358 aa).

77-90 serves as a coordination point for NAD(+); it reads GPKWDNLPIDQRPE. Substrate is bound by residues Arg98, Arg108, Arg137, and Asp221. The Mg(2+) site is built by Asp221, Asp245, and Asp249. 279–291 provides a ligand contact to NAD(+); that stretch reads GSAPDIAHLNIAN.

This sequence belongs to the isocitrate and isopropylmalate dehydrogenases family. LeuB type 1 subfamily. As to quaternary structure, homodimer. Mg(2+) serves as cofactor. Requires Mn(2+) as cofactor.

Its subcellular location is the cytoplasm. The catalysed reaction is (2R,3S)-3-isopropylmalate + NAD(+) = 4-methyl-2-oxopentanoate + CO2 + NADH. It functions in the pathway amino-acid biosynthesis; L-leucine biosynthesis; L-leucine from 3-methyl-2-oxobutanoate: step 3/4. In terms of biological role, catalyzes the oxidation of 3-carboxy-2-hydroxy-4-methylpentanoate (3-isopropylmalate) to 3-carboxy-4-methyl-2-oxopentanoate. The product decarboxylates to 4-methyl-2 oxopentanoate. The chain is 3-isopropylmalate dehydrogenase from Campylobacter jejuni (strain RM1221).